The following is a 262-amino-acid chain: Acyl-[acyl-carrier-protein]--UDP-N-acetylglucosamine O-acyltransferase (262 aa).

This sequence belongs to the transferase hexapeptide repeat family. LpxA subfamily. Homotrimer.

The protein resides in the cytoplasm. It carries out the reaction a (3R)-hydroxyacyl-[ACP] + UDP-N-acetyl-alpha-D-glucosamine = a UDP-3-O-[(3R)-3-hydroxyacyl]-N-acetyl-alpha-D-glucosamine + holo-[ACP]. It functions in the pathway glycolipid biosynthesis; lipid IV(A) biosynthesis; lipid IV(A) from (3R)-3-hydroxytetradecanoyl-[acyl-carrier-protein] and UDP-N-acetyl-alpha-D-glucosamine: step 1/6. Its function is as follows. Involved in the biosynthesis of lipid A, a phosphorylated glycolipid that anchors the lipopolysaccharide to the outer membrane of the cell. This is Acyl-[acyl-carrier-protein]--UDP-N-acetylglucosamine O-acyltransferase from Erwinia tasmaniensis (strain DSM 17950 / CFBP 7177 / CIP 109463 / NCPPB 4357 / Et1/99).